The chain runs to 161 residues: Nucleotide-binding protein Lferr_1091 (161 aa).

It belongs to the YajQ family.

Nucleotide-binding protein. The protein is Nucleotide-binding protein Lferr_1091 of Acidithiobacillus ferrooxidans (strain ATCC 53993 / BNL-5-31) (Leptospirillum ferrooxidans (ATCC 53993)).